The primary structure comprises 92 residues: Large ribosomal subunit protein eL43 (92 aa).

The C4-type zinc-finger motif lies at 39-60 (CDFCGKYGMKRKAVGIWSCKGC).

Belongs to the eukaryotic ribosomal protein eL43 family.

The polypeptide is Large ribosomal subunit protein eL43 (RPL37a) (Ostreococcus lucimarinus (strain CCE9901)).